The sequence spans 651 residues: Histone-lysine N-methyltransferase family member SUVH2 (651 aa).

Residues 1 to 28 (MSTLLPFPDLNLMPDSQSSTAGTTAGDT) form a disordered region. Residues 15-28 (DSQSSTAGTTAGDT) show a composition bias toward low complexity. Positions 202 to 358 (DKHIVGPVTG…KFRLVRIEGQ (157 aa)) constitute a YDG domain. Positions 434–492 (TGCECKLSCTDDCLCARKNGGEFAYDDNGHLLKGKHVVFECGEFCTCGPSCKSRVTQKG) constitute a Pre-SET domain. Zn(2+)-binding residues include C436, C438, C442, C446, C448, C474, C478, C480, and C484. An SET domain is found at 495-638 (NRLEVFRSKE…PLAELSLDYG (144 aa)).

This sequence belongs to the class V-like SAM-binding methyltransferase superfamily. Histone-lysine methyltransferase family. Suvar3-9 subfamily. Self-interacts. Interacts with DNA-directed RNA polymerase V subunit NRPE1 and with DRD1 and DMS3. Binds to MORC1/CRT1. As to expression, expressed at low levels in leaves stems and flowers.

The protein localises to the nucleus. It localises to the chromosome. It is found in the centromere. Its function is as follows. Histone methyltransferase family member that plays a central role in gene silencing. Together with MORC6 and SUVH9, regulates the silencing of some transposable elements (TEs). According to PubMed:15775980, it is required for normal methylation of 'Lys-9' and 'Lys-27' of histone H3, 'Lys-20' of H4, and cytosine, but PubMed:19043555 see no significant effect on histone methylation when the gene is mutated. According to PubMed:19043555, the protein does not bind S-adenosyl-L-methionine and lacks methyltransferase activity. Instead, it may function downstream of DRM2 in RNA-directed DNA methylation, binding to methylated DNA and recruiting DNA-directed RNA polymerase V to chromatin. The chain is Histone-lysine N-methyltransferase family member SUVH2 (SUVH2) from Arabidopsis thaliana (Mouse-ear cress).